Reading from the N-terminus, the 245-residue chain is Nisin immunity protein (245 aa).

The first 19 residues, methionine 1–glycine 19, serve as a signal peptide directing secretion. The N-palmitoyl cysteine moiety is linked to residue cysteine 20. The S-diacylglycerol cysteine moiety is linked to residue cysteine 20.

Its subcellular location is the cell membrane. Its function is as follows. Involved in immunity against exogenously supplied nisin. The polypeptide is Nisin immunity protein (nisI) (Lactococcus lactis subsp. lactis (Streptococcus lactis)).